The sequence spans 87 residues: Large ribosomal subunit protein bL31B (87 aa).

It belongs to the bacterial ribosomal protein bL31 family. Type B subfamily. In terms of assembly, part of the 50S ribosomal subunit.

This is Large ribosomal subunit protein bL31B from Salinispora arenicola (strain CNS-205).